The primary structure comprises 300 residues: MTDSIPHIPVLVKESLSLFRGRNPVVFCDVTVGAGGHAEAFLTEFPSIERYDGSDRDLSALALSENRLLPFKDRVRLRHASFEEVDTLTSDGTYDGVLADLGVSSMQLNNLERGFSFQGEDHPLDMRMDTSRGMTASEVLNSLREEEIGEIFRNYGEEPLWRSAAAAVVHFRKKKKILTVKDLKDATSGVFPSYRLRKKIHPLTLIFQALRIYVNQEGAQLKVLLDSAFRWLRPGGRLAVISFCSLDDRPVKWAFREAEARGLGKILTKKVIMPSYEETRMNPRSRSAKLRCFEKSFEDK.

Residues Gly35–His37, Asp55, Phe82, Asp100, and Gln107 each bind S-adenosyl-L-methionine.

The protein belongs to the methyltransferase superfamily. RsmH family.

Its subcellular location is the cytoplasm. The enzyme catalyses cytidine(1402) in 16S rRNA + S-adenosyl-L-methionine = N(4)-methylcytidine(1402) in 16S rRNA + S-adenosyl-L-homocysteine + H(+). Its function is as follows. Specifically methylates the N4 position of cytidine in position 1402 (C1402) of 16S rRNA. This chain is Ribosomal RNA small subunit methyltransferase H, found in Chlamydia trachomatis serovar L2 (strain ATCC VR-902B / DSM 19102 / 434/Bu).